Here is a 272-residue protein sequence, read N- to C-terminus: Secretagogin (272 aa).

6 EF-hand domains span residues 8-43 (LDAAGFLQIWQHFDADDNGYIEGKELDDFFRHMLKK), 53-89 (ERVQQIKKSFMSAYDATFDGRLQIEELANMILPQEEN), 101-136 (DNSVEFMKIWRKYDADSSGYISAAELKNFLKDLFLQ), 145-180 (KLDEYTDAMMKIFDKNKDGRLDLNDLARILALQENF), 193-228 (ERKRDFEKIFAHYDVSRTGALEGPEVDGFVKDMMEL), and 237-272 (DLDKFRECLLTHCDMNKDGKIQKSELALCLGLKHKP). The Ca(2+) site is built by Asp21, Asp23, Asn25, Tyr27, and Glu32. Ca(2+) is bound by residues Asp114, Asp116, Ser118, Tyr120, Glu125, Asp158, Asn160, Asp162, Arg164, Asp169, Asp206, Ser208, Thr210, Glu217, Asp250, Asn252, Asp254, Lys256, and Glu261.

The protein resides in the cytoplasm. This chain is Secretagogin (scgn), found in Danio rerio (Zebrafish).